The chain runs to 85 residues: MGSFSIWHWLIVLVIIMMVFGTKKLRNIGSDLGSAVKGFKDGMREGQEDKPAGSQQPQQTAGQPPRELHDATTIDVEARDKSKQG.

Residues 1–21 form a helical membrane-spanning segment; sequence MGSFSIWHWLIVLVIIMMVFG. The segment covering 39 to 51 has biased composition (basic and acidic residues); the sequence is FKDGMREGQEDKP. The disordered stretch occupies residues 39-85; the sequence is FKDGMREGQEDKPAGSQQPQQTAGQPPRELHDATTIDVEARDKSKQG. Positions 53–62 are enriched in polar residues; that stretch reads GSQQPQQTAG. Positions 66-85 are enriched in basic and acidic residues; it reads RELHDATTIDVEARDKSKQG.

This sequence belongs to the TatA/E family. As to quaternary structure, the Tat system comprises two distinct complexes: a TatABC complex, containing multiple copies of TatA, TatB and TatC subunits, and a separate TatA complex, containing only TatA subunits. Substrates initially bind to the TatABC complex, which probably triggers association of the separate TatA complex to form the active translocon.

It localises to the cell inner membrane. In terms of biological role, part of the twin-arginine translocation (Tat) system that transports large folded proteins containing a characteristic twin-arginine motif in their signal peptide across membranes. TatA could form the protein-conducting channel of the Tat system. This chain is Sec-independent protein translocase protein TatA, found in Ralstonia pickettii (strain 12J).